Reading from the N-terminus, the 173-residue chain is Large ribosomal subunit protein uL10 (173 aa).

It belongs to the universal ribosomal protein uL10 family. In terms of assembly, part of the ribosomal stalk of the 50S ribosomal subunit. The N-terminus interacts with L11 and the large rRNA to form the base of the stalk. The C-terminus forms an elongated spine to which L12 dimers bind in a sequential fashion forming a multimeric L10(L12)X complex.

Functionally, forms part of the ribosomal stalk, playing a central role in the interaction of the ribosome with GTP-bound translation factors. This Oleidesulfovibrio alaskensis (strain ATCC BAA-1058 / DSM 17464 / G20) (Desulfovibrio alaskensis) protein is Large ribosomal subunit protein uL10.